The sequence spans 186 residues: Ribosome maturation factor RimM (186 aa).

Residues 93-166 (PDEYYDHQLM…RAVIDPPPGL (74 aa)) enclose the PRC barrel domain. Residues 160-186 (IDPPPGLIDDRAEVDSSDTEAATEADA) form a disordered region. Residues 174 to 186 (DSSDTEAATEADA) show a composition bias toward acidic residues.

The protein belongs to the RimM family. In terms of assembly, binds ribosomal protein uS19.

The protein resides in the cytoplasm. An accessory protein needed during the final step in the assembly of 30S ribosomal subunit, possibly for assembly of the head region. Essential for efficient processing of 16S rRNA. May be needed both before and after RbfA during the maturation of 16S rRNA. It has affinity for free ribosomal 30S subunits but not for 70S ribosomes. This Streptomyces avermitilis (strain ATCC 31267 / DSM 46492 / JCM 5070 / NBRC 14893 / NCIMB 12804 / NRRL 8165 / MA-4680) protein is Ribosome maturation factor RimM.